A 226-amino-acid chain; its full sequence is Protein-L-isoaspartate(D-aspartate) O-methyltransferase (226 aa).

S-adenosyl-L-homocysteine contacts are provided by residues 57 to 60, His-65, Ser-89, 115 to 116, 147 to 148, and Thr-222; these read VTIS, EH, and DG. Ser-60 is an active-site residue.

It belongs to the methyltransferase superfamily. L-isoaspartyl/D-aspartyl protein methyltransferase family. As to quaternary structure, monomer.

The protein localises to the cytoplasm. The protein resides in the cytosol. The enzyme catalyses [protein]-L-isoaspartate + S-adenosyl-L-methionine = [protein]-L-isoaspartate alpha-methyl ester + S-adenosyl-L-homocysteine. Functionally, initiates the repair of damaged proteins by catalyzing methyl esterification of L-isoaspartyl and D-aspartyl residues produced by spontaneous isomerization and racemization of L-aspartyl and L-asparaginyl residues in aging peptides and proteins. In Drosophila melanogaster (Fruit fly), this protein is Protein-L-isoaspartate(D-aspartate) O-methyltransferase (Pcmt).